We begin with the raw amino-acid sequence, 182 residues long: Nascent polypeptide-associated complex subunit alpha (182 aa).

The 65-residue stretch at 17–81 folds into the NAC-A/B domain; sequence NKNEKKAKEL…AKVDDMNQRI (65 aa). Positions 120–148 are disordered; the sequence is ASLQGGESNADAAEDDNEEVDETGINPKD. Acidic residues predominate over residues 131–141; it reads AAEDDNEEVDE. The UBA domain maps to 144–182; sequence INPKDIDLIVEQTRVSRGSAVKALKKHDGDMVNALMELS.

This sequence belongs to the NAC-alpha family. Part of the nascent polypeptide-associated complex (NAC), consisting of EGD2 and EGD1. NAC associates with ribosomes via EGD1.

It localises to the cytoplasm. The protein resides in the nucleus. Component of the nascent polypeptide-associated complex (NAC), a dynamic component of the ribosomal exit tunnel, protecting the emerging polypeptides from interaction with other cytoplasmic proteins to ensure appropriate nascent protein targeting. The NAC complex also promotes mitochondrial protein import by enhancing productive ribosome interactions with the outer mitochondrial membrane and blocks the inappropriate interaction of ribosomes translating non-secretory nascent polypeptides with translocation sites in the membrane of the endoplasmic reticulum. EGD2 may also be involved in transcription regulation. The sequence is that of Nascent polypeptide-associated complex subunit alpha (EGD2) from Lodderomyces elongisporus (strain ATCC 11503 / CBS 2605 / JCM 1781 / NBRC 1676 / NRRL YB-4239) (Yeast).